A 194-amino-acid chain; its full sequence is Probable GTP-binding protein EngB (194 aa).

The EngB-type G domain maps to 22–194; the sequence is DLPEYALAGR…AWQFIKEGME (173 aa). GTP contacts are provided by residues 30–37, 57–61, 75–78, 142–145, and 174–176; these read GRSNVGKS, GKTQT, DVPG, TKAD, and FSS. The Mg(2+) site is built by S37 and T59.

The protein belongs to the TRAFAC class TrmE-Era-EngA-EngB-Septin-like GTPase superfamily. EngB GTPase family. Mg(2+) is required as a cofactor.

In terms of biological role, necessary for normal cell division and for the maintenance of normal septation. The sequence is that of Probable GTP-binding protein EngB from Listeria welshimeri serovar 6b (strain ATCC 35897 / DSM 20650 / CCUG 15529 / CIP 8149 / NCTC 11857 / SLCC 5334 / V8).